Here is a 293-residue protein sequence, read N- to C-terminus: Small ribosomal subunit biogenesis GTPase RsgA (293 aa).

One can recognise a CP-type G domain in the interval 63 to 223; the sequence is KNWLVRPPIA…VADTPGFSAL (161 aa). Residues 112 to 115 and 166 to 174 each bind GTP; these read NKMD and GQSGVGKSS. Cys247, Cys252, His254, and Cys260 together coordinate Zn(2+).

It belongs to the TRAFAC class YlqF/YawG GTPase family. RsgA subfamily. In terms of assembly, monomer. Associates with 30S ribosomal subunit, binds 16S rRNA. Zn(2+) serves as cofactor.

It is found in the cytoplasm. One of several proteins that assist in the late maturation steps of the functional core of the 30S ribosomal subunit. Helps release RbfA from mature subunits. May play a role in the assembly of ribosomal proteins into the subunit. Circularly permuted GTPase that catalyzes slow GTP hydrolysis, GTPase activity is stimulated by the 30S ribosomal subunit. This Geobacillus sp. (strain WCH70) protein is Small ribosomal subunit biogenesis GTPase RsgA.